Reading from the N-terminus, the 484-residue chain is Protein LAZ1 homolog 1 (484 aa).

The first 19 residues, 1-19 (MEWRGILCSLLFIVSVGES), serve as a signal peptide directing secretion. A run of 6 helical transmembrane segments spans residues 42–62 (PILS…YLIF), 76–96 (FLIG…LSLV), 190–210 (MILK…GVYG), 219–239 (GYPY…YCLV), 264–284 (IVFL…MGLV), and 299–319 (YIIC…FPAA). A disordered region spans residues 344–364 (PDPEEVKDSERTTRTRYGRHD). A compositionally biased stretch (basic and acidic residues) spans 347 to 364 (EEVKDSERTTRTRYGRHD). Residues 406 to 428 (IAKINRTFHQISENVKRFEQQKK) are a coiled coil. The segment at 459–484 (VSDSGLGSTNRHHQSRVSGLWTRMRR) is disordered.

It belongs to the TMEM184 family.

The protein resides in the membrane. The protein is Protein LAZ1 homolog 1 of Arabidopsis thaliana (Mouse-ear cress).